A 274-amino-acid chain; its full sequence is N-acetylmuramic acid 6-phosphate etherase (274 aa).

One can recognise an SIS domain in the interval 52–215; sequence IVPRMEQGGR…STSIMIRLGR (164 aa). Glu80 acts as the Proton donor in catalysis. Glu111 is a catalytic residue.

The protein belongs to the GCKR-like family. MurNAc-6-P etherase subfamily. In terms of assembly, homodimer.

It carries out the reaction N-acetyl-D-muramate 6-phosphate + H2O = N-acetyl-D-glucosamine 6-phosphate + (R)-lactate. Its pathway is amino-sugar metabolism; N-acetylmuramate degradation. Specifically catalyzes the cleavage of the D-lactyl ether substituent of MurNAc 6-phosphate, producing GlcNAc 6-phosphate and D-lactate. The sequence is that of N-acetylmuramic acid 6-phosphate etherase from Porphyromonas gingivalis (strain ATCC 33277 / DSM 20709 / CIP 103683 / JCM 12257 / NCTC 11834 / 2561).